A 312-amino-acid polypeptide reads, in one-letter code: Ribosomal RNA small subunit methyltransferase H (312 aa).

S-adenosyl-L-methionine is bound by residues 32-34 (AGH), Asp51, Phe78, Asp99, and Gln106.

The protein belongs to the methyltransferase superfamily. RsmH family.

It is found in the cytoplasm. The catalysed reaction is cytidine(1402) in 16S rRNA + S-adenosyl-L-methionine = N(4)-methylcytidine(1402) in 16S rRNA + S-adenosyl-L-homocysteine + H(+). In terms of biological role, specifically methylates the N4 position of cytidine in position 1402 (C1402) of 16S rRNA. This Exiguobacterium sibiricum (strain DSM 17290 / CCUG 55495 / CIP 109462 / JCM 13490 / 255-15) protein is Ribosomal RNA small subunit methyltransferase H.